The chain runs to 111 residues: Protein IDA-LIKE 5 (111 aa).

Positions 1 to 27 are cleaved as a signal peptide; it reads MGNKRIKAMMILVVMIMMVFSWRICEA. Basic residues predominate over residues 46 to 56; sequence RRPNPRNHHHQ. The tract at residues 46 to 65 is disordered; it reads RRPNPRNHHHQNQGFNGDDY.

As to expression, expressed mainly in flowers. Lower levels in buds and seedlings. Detected in vascular tissues and in hydathodes.

It localises to the secreted. Its subcellular location is the extracellular space. In terms of biological role, may be involved in floral abscission. This Arabidopsis thaliana (Mouse-ear cress) protein is Protein IDA-LIKE 5 (IDL5).